Reading from the N-terminus, the 508-residue chain is Light-independent protochlorophyllide reductase subunit B (508 aa).

Asp36 is a [4Fe-4S] cluster binding site. Catalysis depends on Asp294, which acts as the Proton donor. 429-430 lines the substrate pocket; the sequence is GM.

Belongs to the ChlB/BchB/BchZ family. As to quaternary structure, protochlorophyllide reductase is composed of three subunits; ChlL, ChlN and ChlB. Forms a heterotetramer of two ChlB and two ChlN subunits. Requires [4Fe-4S] cluster as cofactor.

The enzyme catalyses chlorophyllide a + oxidized 2[4Fe-4S]-[ferredoxin] + 2 ADP + 2 phosphate = protochlorophyllide a + reduced 2[4Fe-4S]-[ferredoxin] + 2 ATP + 2 H2O. It participates in porphyrin-containing compound metabolism; chlorophyll biosynthesis (light-independent). In terms of biological role, component of the dark-operative protochlorophyllide reductase (DPOR) that uses Mg-ATP and reduced ferredoxin to reduce ring D of protochlorophyllide (Pchlide) to form chlorophyllide a (Chlide). This reaction is light-independent. The NB-protein (ChlN-ChlB) is the catalytic component of the complex. The protein is Light-independent protochlorophyllide reductase subunit B of Thermosynechococcus vestitus (strain NIES-2133 / IAM M-273 / BP-1).